The chain runs to 330 residues: ADP-L-glycero-D-manno-heptose-6-epimerase (330 aa).

Residues 11 to 12, 32 to 33, K39, K54, 75 to 79, and N92 each bind NADP(+); these read FI, DN, and EGACS. Residue Y139 is the Proton acceptor of the active site. An NADP(+)-binding site is contributed by K143. N168 provides a ligand contact to substrate. Positions 169 and 177 each coordinate NADP(+). Catalysis depends on K177, which acts as the Proton acceptor. Substrate contacts are provided by residues R179, H186, 200 to 203, R213, and Y292; that span reads FGEY.

This sequence belongs to the NAD(P)-dependent epimerase/dehydratase family. HldD subfamily. In terms of assembly, homopentamer. Requires NADP(+) as cofactor.

It carries out the reaction ADP-D-glycero-beta-D-manno-heptose = ADP-L-glycero-beta-D-manno-heptose. Its pathway is nucleotide-sugar biosynthesis; ADP-L-glycero-beta-D-manno-heptose biosynthesis; ADP-L-glycero-beta-D-manno-heptose from D-glycero-beta-D-manno-heptose 7-phosphate: step 4/4. Its function is as follows. Catalyzes the interconversion between ADP-D-glycero-beta-D-manno-heptose and ADP-L-glycero-beta-D-manno-heptose via an epimerization at carbon 6 of the heptose. The chain is ADP-L-glycero-D-manno-heptose-6-epimerase from Burkholderia mallei (strain NCTC 10247).